A 652-amino-acid polypeptide reads, in one-letter code: 2',3'-cyclic-nucleotide 2'-phosphodiesterase/3'-nucleotidase (652 aa).

An N-terminal signal peptide occupies residues 1 to 24 (MFKRPLTLSLLASLIALTTSTAQA). Residues aspartate 36, histidine 38, aspartate 81, asparagine 121, histidine 230, histidine 262, and histidine 264 each contribute to the a divalent metal cation site. Residues tyrosine 445 and 549-555 (YRAYSGK) each bind substrate.

This sequence belongs to the 5'-nucleotidase family. Requires a divalent metal cation as cofactor.

It localises to the periplasm. It catalyses the reaction a nucleoside 2',3'-cyclic phosphate + H2O = a nucleoside 3'-phosphate + H(+). The enzyme catalyses a ribonucleoside 3'-phosphate + H2O = a ribonucleoside + phosphate. This bifunctional enzyme catalyzes two consecutive reactions during ribonucleic acid degradation. Converts a 2',3'-cyclic nucleotide to a 3'-nucleotide and then the 3'-nucleotide to the corresponding nucleoside and phosphate. This Yersinia enterocolitica protein is 2',3'-cyclic-nucleotide 2'-phosphodiesterase/3'-nucleotidase (cpdB).